A 386-amino-acid chain; its full sequence is Succinate--CoA ligase [ADP-forming] subunit beta (386 aa).

One can recognise an ATP-grasp domain in the interval 9 to 244 (KDILRQFGVP…LDEEDPAEVE (236 aa)). Residues K46, 53–55 (GRG), E99, A102, and E107 each bind ATP. Mg(2+)-binding residues include N199 and D213. Substrate is bound by residues N264 and 321-323 (GIM).

It belongs to the succinate/malate CoA ligase beta subunit family. In terms of assembly, heterotetramer of two alpha and two beta subunits. Mg(2+) serves as cofactor.

It carries out the reaction succinate + ATP + CoA = succinyl-CoA + ADP + phosphate. It catalyses the reaction GTP + succinate + CoA = succinyl-CoA + GDP + phosphate. The protein operates within carbohydrate metabolism; tricarboxylic acid cycle; succinate from succinyl-CoA (ligase route): step 1/1. Functionally, succinyl-CoA synthetase functions in the citric acid cycle (TCA), coupling the hydrolysis of succinyl-CoA to the synthesis of either ATP or GTP and thus represents the only step of substrate-level phosphorylation in the TCA. The beta subunit provides nucleotide specificity of the enzyme and binds the substrate succinate, while the binding sites for coenzyme A and phosphate are found in the alpha subunit. This is Succinate--CoA ligase [ADP-forming] subunit beta from Delftia acidovorans (strain DSM 14801 / SPH-1).